A 345-amino-acid polypeptide reads, in one-letter code: Glycerol-3-phosphate dehydrogenase [NAD(P)+] (345 aa).

Residues serine 11, tryptophan 12, histidine 32, arginine 33, and lysine 106 each contribute to the NADPH site. Residues lysine 106, glycine 137, and serine 139 each coordinate sn-glycerol 3-phosphate. Residue alanine 141 participates in NADPH binding. Sn-glycerol 3-phosphate-binding residues include lysine 192, aspartate 245, serine 255, arginine 256, and asparagine 257. The Proton acceptor role is filled by lysine 192. Arginine 256 provides a ligand contact to NADPH. Residues valine 280 and glutamate 282 each contribute to the NADPH site.

This sequence belongs to the NAD-dependent glycerol-3-phosphate dehydrogenase family.

It is found in the cytoplasm. The catalysed reaction is sn-glycerol 3-phosphate + NAD(+) = dihydroxyacetone phosphate + NADH + H(+). It carries out the reaction sn-glycerol 3-phosphate + NADP(+) = dihydroxyacetone phosphate + NADPH + H(+). The protein operates within membrane lipid metabolism; glycerophospholipid metabolism. In terms of biological role, catalyzes the reduction of the glycolytic intermediate dihydroxyacetone phosphate (DHAP) to sn-glycerol 3-phosphate (G3P), the key precursor for phospholipid synthesis. In Bacillus pumilus (strain SAFR-032), this protein is Glycerol-3-phosphate dehydrogenase [NAD(P)+].